An 842-amino-acid polypeptide reads, in one-letter code: Homeobox-leucine zipper protein REVOLUTA (842 aa).

Residues 1–20 (MEMAVANHRERSSDSMNRHL) form a disordered region. Basic and acidic residues predominate over residues 7–20 (NHRERSSDSMNRHL). The segment at residues 22–85 (SSGKYVRYTA…NRRCRDKQRK (64 aa)) is a DNA-binding region (homeobox). Residues 90-121 (LQSVNRKLSAMNKLLMEENDRLQKQVSQLVCE) adopt a coiled-coil conformation. The 229-residue stretch at 151–379 (DANSPAGLLS…LAQESNGEVV (229 aa)) folds into the START domain.

Belongs to the HD-ZIP homeobox family. Class III subfamily. As to quaternary structure, homodimer. Heterodimer with ZPR1, ZPR2, ZPR3 or ZPR4. Interacts with ESR1 and ESR2. Interacts with ZPR1, ZPR2, ZPR3 and ZPR4. Heterodimerization with ZPR3 prevents DNA binding by REV. As to expression, expressed in the interfascicular regions of stem and vascular bundles of young roots and leaves.

It is found in the nucleus. Its function is as follows. Probable transcription factor involved in the regulation of interfascicular fiber (cortical cells) and secondary xylem differentiation in the inflorescence stems. Required for lateral shoot meristems (LSMs) and flower meristems (FMs) initiation. May be involved in the determination of vascular patterning and organ polarity. Directly regulates the expression of AGO10, ZPR1, ZPR2, ZPR3 and ZPR4. Required to regulate adaxial-abaxial polarity and leaf axial patterning. The protein is Homeobox-leucine zipper protein REVOLUTA of Arabidopsis thaliana (Mouse-ear cress).